We begin with the raw amino-acid sequence, 149 residues long: Transcriptional repressor NrdR (149 aa).

The segment at 3 to 34 (CPFCDTEETKVIDSRLVSDGYQVRRRRECGHC) is a zinc-finger region. One can recognise an ATP-cone domain in the interval 49 to 139 (PKIIKTDGTR…VYLSFDDIDQ (91 aa)).

Belongs to the NrdR family. Zn(2+) is required as a cofactor.

Negatively regulates transcription of bacterial ribonucleotide reductase nrd genes and operons by binding to NrdR-boxes. The protein is Transcriptional repressor NrdR of Haemophilus influenzae (strain 86-028NP).